The sequence spans 304 residues: E3 ubiquitin-protein ligase BOI (304 aa).

Positions Leu178 to Leu214 are WRD domain. Residues Gln197 to Phe220 adopt a coiled-coil conformation. The segment at Cys254–Asp291 adopts an RING-type zinc-finger fold.

Interacts with MYB108/BOS1 and the DELLA proteins GAI, RGA, RGL1, RGL2 and RGL3. In terms of tissue distribution, expressed in leaves, siliques, roots, flowering tissues and stigma tips.

The protein localises to the nucleus. The catalysed reaction is S-ubiquitinyl-[E2 ubiquitin-conjugating enzyme]-L-cysteine + [acceptor protein]-L-lysine = [E2 ubiquitin-conjugating enzyme]-L-cysteine + N(6)-ubiquitinyl-[acceptor protein]-L-lysine.. Its pathway is protein degradation; proteasomal ubiquitin-dependent pathway. Functionally, E3 ubiquitin-protein ligase involved in the regulation of pathogen and abiotic stress responses by facilitating degradation of MYB108/BOI. Attenuates cell death by preventing caspase activation. Has no effect on the stability of the DELLA proteins. Not regulated by MYB108/BOI. The protein is E3 ubiquitin-protein ligase BOI (BOI) of Arabidopsis thaliana (Mouse-ear cress).